The chain runs to 338 residues: Lipopolysaccharide 1,2-glucosyltransferase (338 aa).

UDP contacts are provided by residues 33–38 (GVDANY) and 130–131 (DA). 2 residues coordinate Mg(2+): D130 and D132. 2 consecutive short sequence motifs (DXD) follow at residues 130–132 (DAD) and 215–217 (DQD). H264 contributes to the Mg(2+) binding site. 264 to 270 (HYTGATK) serves as a coordination point for UDP.

This sequence belongs to the glycosyltransferase 8 family. Mg(2+) is required as a cofactor.

Its subcellular location is the cell inner membrane. It carries out the reaction UDP-glucose + [lipopolysaccharide] = UDP + D-glucosyl-[lipopolysaccharide].. The catalysed reaction is alpha-D-Glc-(1-&gt;3)-[alpha-D-Gal-(1-&gt;6)]-alpha-D-Glc-(1-&gt;3)-[L-alpha-D-Hep-(1-&gt;7)]-4-O-PO3(2-)-L-alpha-D-Hep-(1-&gt;3)-4-O-PO3(2-)-L-alpha-D-Hep-(1-&gt;5)-[alpha-Kdo-(2-&gt;4)]-alpha-Kdo-(2-&gt;6)-lipid A + UDP-alpha-D-glucose = alpha-D-Glc-(1-&gt;2)-alpha-D-Glc-(1-&gt;3)-[alpha-D-Gal-(1-&gt;6)]-alpha-D-Glc-(1-&gt;3)-[L-alpha-D-Hep-(1-&gt;7)]-4-O-PO3(2-)-L-alpha-D-Hep-(1-&gt;3)-4-O-PO3(2-)-L-alpha-D-Hep-(1-&gt;5)-[alpha-Kdo-(2-&gt;4)]-alpha-Kdo-(2-&gt;6)-lipid A + UDP + H(+). Its pathway is bacterial outer membrane biogenesis; LPS core biosynthesis. Glucosyltransferase involved in the biosynthesis of the core oligosaccharide region of lipopolysaccharide (LPS). Catalyzes the addition of a glucose (glucose III) to the outer-core glucose II. The protein is Lipopolysaccharide 1,2-glucosyltransferase of Escherichia coli (strain K12).